Reading from the N-terminus, the 332-residue chain is Ketol-acid reductoisomerase (NADP(+)) (332 aa).

The 182-residue stretch at 1 to 182 (MAQTWKDTDI…GSARAGLIKT (182 aa)) folds into the KARI N-terminal Rossmann domain. Residues 25 to 28 (YGIQ), Lys-48, Ser-53, and 83 to 86 (DMIQ) each bind NADP(+). Residue His-108 is part of the active site. Gly-134 provides a ligand contact to NADP(+). The KARI C-terminal knotted domain maps to 183–329 (AFKEEVETDW…KEMRKMMWPD (147 aa)). Mg(2+) is bound by residues Asp-191, Glu-195, Glu-227, and Glu-231. A substrate-binding site is contributed by Ser-252.

The protein belongs to the ketol-acid reductoisomerase family. The cofactor is Mg(2+).

It carries out the reaction (2R)-2,3-dihydroxy-3-methylbutanoate + NADP(+) = (2S)-2-acetolactate + NADPH + H(+). The enzyme catalyses (2R,3R)-2,3-dihydroxy-3-methylpentanoate + NADP(+) = (S)-2-ethyl-2-hydroxy-3-oxobutanoate + NADPH + H(+). Its pathway is amino-acid biosynthesis; L-isoleucine biosynthesis; L-isoleucine from 2-oxobutanoate: step 2/4. The protein operates within amino-acid biosynthesis; L-valine biosynthesis; L-valine from pyruvate: step 2/4. Involved in the biosynthesis of branched-chain amino acids (BCAA). Catalyzes an alkyl-migration followed by a ketol-acid reduction of (S)-2-acetolactate (S2AL) to yield (R)-2,3-dihydroxy-isovalerate. In the isomerase reaction, S2AL is rearranged via a Mg-dependent methyl migration to produce 3-hydroxy-3-methyl-2-ketobutyrate (HMKB). In the reductase reaction, this 2-ketoacid undergoes a metal-dependent reduction by NADPH to yield (R)-2,3-dihydroxy-isovalerate. In Nitrosopumilus maritimus (strain SCM1), this protein is Ketol-acid reductoisomerase (NADP(+)).